The sequence spans 30 residues: Cytochrome c oxidase subunit 5C (30 aa).

Residues 15 to 30 traverse the membrane as a helical segment; sequence VVKELVIXXXLGLXAG.

Belongs to the cytochrome c oxidase subunit 5C family.

The protein localises to the mitochondrion inner membrane. Functionally, this protein is one of the nuclear-coded polypeptide chains of cytochrome c oxidase, the terminal oxidase in mitochondrial electron transport. This Solanum tuberosum (Potato) protein is Cytochrome c oxidase subunit 5C (COX5C).